The following is a 284-amino-acid chain: Riboflavin transporter (284 aa).

2 consecutive EamA domains span residues 2–129 and 141–273; these read VAAC…LIII and LLPI…SLYL. A run of 8 helical transmembrane segments spans residues 26–46, 58–78, 82–102, 115–135, 136–156, 167–187, 195–215, and 247–267; these read SVII…PLLV, FGLH…WIYA, VPIW…ILCA, LLTT…WSDS, YTVY…YSVM, ASIS…LWLA, ITAP…FTAL, and GWIV…ALII.

This sequence belongs to the drug/metabolite transporter (DMT) superfamily. 10 TMS drug/metabolite exporter (DME) (TC 2.A.7.3) family.

It is found in the cell membrane. Functionally, transports riboflavin into the cell. The chain is Riboflavin transporter from Brucella anthropi (strain ATCC 49188 / DSM 6882 / CCUG 24695 / JCM 21032 / LMG 3331 / NBRC 15819 / NCTC 12168 / Alc 37) (Ochrobactrum anthropi).